Here is a 100-residue protein sequence, read N- to C-terminus: uncharacterized protein (100 aa).

This is an uncharacterized protein from Borreliella burgdorferi (strain ATCC 35210 / DSM 4680 / CIP 102532 / B31) (Borrelia burgdorferi).